The chain runs to 760 residues: Catecholate siderophore receptor Fiu (760 aa).

An N-terminal signal peptide occupies residues 1–31; that stretch reads MENNRNFPARQFHSLTFFAGLCIGITPVAQA. One can recognise a TBDR plug domain in the interval 67–175; sequence PVADTTRTMT…PTGSINMISK (109 aa). Residues 180-760 enclose the TBDR beta-barrel domain; it reads DSGIDASASI…TFLLTANMHF (581 aa). The TonB C-terminal box motif lies at 743 to 760; that stretch reads RYHPGEPRTFLLTANMHF.

This sequence belongs to the TonB-dependent receptor family.

The protein resides in the cell outer membrane. Functionally, involved in the active transport across the outer membrane of iron complexed with catecholate siderophores such as dihydroxybenzoylserine and dihydroxybenzoate. It derives its energy for transport by interacting with the trans-periplasmic membrane protein TonB. Can also transport catechol-substituted cephalosporins. Receptor for microcins M, H47 and E492. The polypeptide is Catecholate siderophore receptor Fiu (fiu) (Escherichia coli O6:H1 (strain CFT073 / ATCC 700928 / UPEC)).